The following is a 130-amino-acid chain: Fumarate reductase subunit D (130 aa).

The next 3 helical transmembrane spans lie at 35 to 55 (FAMITPITVLVLGILAPLGVI), 67 to 87 (SFATSIIGALFIIGTLALPMW), and 110 to 130 (IACYGFATIISALAVVFIFMI).

This sequence belongs to the FrdD family. In terms of assembly, part of an enzyme complex containing four subunits: a flavoprotein (FrdA), an iron-sulfur protein (FrdB), and two hydrophobic anchor proteins (FrdC and FrdD).

It is found in the cell inner membrane. In terms of biological role, anchors the catalytic components of the fumarate reductase complex to the cell membrane, binds quinones. The polypeptide is Fumarate reductase subunit D (Vibrio cholerae serotype O1 (strain M66-2)).